The primary structure comprises 866 residues: DNA mismatch repair protein MutS (866 aa).

Residue 613–620 (GPNMGGKS) coordinates ATP.

It belongs to the DNA mismatch repair MutS family.

Functionally, this protein is involved in the repair of mismatches in DNA. It is possible that it carries out the mismatch recognition step. This protein has a weak ATPase activity. The chain is DNA mismatch repair protein MutS from Haemophilus ducreyi (strain 35000HP / ATCC 700724).